Reading from the N-terminus, the 828-residue chain is DNA gyrase subunit A (828 aa).

The Topo IIA-type catalytic domain occupies 32–497 (LPDVRDGLKP…EVLSLEDEDL (466 aa)). The O-(5'-phospho-DNA)-tyrosine intermediate role is filled by Tyr-120. A GyrA-box motif is present at residues 524–530 (QKRGGRG).

The protein belongs to the type II topoisomerase GyrA/ParC subunit family. Heterotetramer, composed of two GyrA and two GyrB chains. In the heterotetramer, GyrA contains the active site tyrosine that forms a transient covalent intermediate with DNA, while GyrB binds cofactors and catalyzes ATP hydrolysis.

Its subcellular location is the cytoplasm. It carries out the reaction ATP-dependent breakage, passage and rejoining of double-stranded DNA.. A type II topoisomerase that negatively supercoils closed circular double-stranded (ds) DNA in an ATP-dependent manner to modulate DNA topology and maintain chromosomes in an underwound state. Negative supercoiling favors strand separation, and DNA replication, transcription, recombination and repair, all of which involve strand separation. Also able to catalyze the interconversion of other topological isomers of dsDNA rings, including catenanes and knotted rings. Type II topoisomerases break and join 2 DNA strands simultaneously in an ATP-dependent manner. This chain is DNA gyrase subunit A, found in Streptococcus pyogenes serotype M3 (strain ATCC BAA-595 / MGAS315).